A 623-amino-acid chain; its full sequence is V-type proton ATPase catalytic subunit A (623 aa).

252 to 259 (GAFGCGKT) is an ATP binding site.

It belongs to the ATPase alpha/beta chains family. In terms of assembly, V-ATPase is a heteromultimeric enzyme composed of a peripheral catalytic V1 complex (main components: subunits A, B, C, D, E, and F) attached to an integral membrane V0 proton pore complex (main component: the proteolipid protein).

The enzyme catalyses ATP + H2O + 4 H(+)(in) = ADP + phosphate + 5 H(+)(out). In terms of biological role, catalytic subunit of the peripheral V1 complex of vacuolar ATPase. V-ATPase vacuolar ATPase is responsible for acidifying a variety of intracellular compartments in eukaryotic cells. This is V-type proton ATPase catalytic subunit A from Daucus carota (Wild carrot).